The following is a 321-amino-acid chain: Putative ankyrin repeat domain-containing protein 26-like protein (321 aa).

ANK repeat units follow at residues 48–78 (KHLG…DLDE), 82–111 (KKRT…QLDV), 115–144 (KNRT…DPDL), 148–177 (YGNT…NIES), and 181–210 (DELT…NLTA). Disordered stretches follow at residues 222-242 (EYKE…GTSN) and 268-321 (FNKP…NENI). Residues 229–242 (PRNPQNSNPEGTSN) show a composition bias toward polar residues.

The protein is Putative ankyrin repeat domain-containing protein 26-like protein (ANKRD26P1) of Homo sapiens (Human).